A 155-amino-acid polypeptide reads, in one-letter code: Myosin light chain alkali (155 aa).

EF-hand domains follow at residues 7–41 (REVE…LNLN) and 80–115 (GCYE…LGES).

As to quaternary structure, myosin is a hexamer of 2 heavy chains and 4 light chains.

The protein is Myosin light chain alkali (Mlc1) of Drosophila simulans (Fruit fly).